The primary structure comprises 466 residues: Transcription factor SOX-10 (466 aa).

5 disordered regions span residues Met1–Lys67, Leu160–Ala200, Asp213–Asn275, Thr344–Thr375, and Arg433–Pro466. Low complexity predominate over residues Leu23–Gly32. At Ser24 the chain carries Phosphoserine. Residues Glu62–Pro102 are dimerization (DIM). Positions Val104–Lys172 form a DNA-binding region, HMG box. Residues Leu160–Tyr173 are compositionally biased toward basic and acidic residues. The span at Ala183–Ala200 shows a compositional bias: low complexity. The tract at residues Pro228–Val310 is transactivation domain (TAM). Basic and acidic residues predominate over residues Ala254 to Ile271. Residues Lys353–Pro466 are transactivation domain (TAC). The segment covering Ser440 to Pro466 has biased composition (polar residues).

Monomer. Interacts with Armcx3 at the mitochondrial outer membrane surface. Interacts with PAX3. In terms of tissue distribution, expressed in oligodendroglia of the spinal tube (at protein level).

It localises to the cytoplasm. Its subcellular location is the nucleus. The protein resides in the mitochondrion outer membrane. Its function is as follows. Transcription factor that plays a central role in developing and mature glia. Specifically activates expression of myelin genes, during oligodendrocyte (OL) maturation, such as DUSP15 and MYRF, thereby playing a central role in oligodendrocyte maturation and CNS myelination. Once induced, MYRF cooperates with SOX10 to implement the myelination program. Transcriptional activator of MITF, acting synergistically with PAX3. Transcriptional activator of MBP, via binding to the gene promoter. The protein is Transcription factor SOX-10 (Sox10) of Mus musculus (Mouse).